Consider the following 188-residue polypeptide: Elongation factor P (188 aa).

The protein belongs to the elongation factor P family.

It is found in the cytoplasm. It functions in the pathway protein biosynthesis; polypeptide chain elongation. Involved in peptide bond synthesis. Stimulates efficient translation and peptide-bond synthesis on native or reconstituted 70S ribosomes in vitro. Probably functions indirectly by altering the affinity of the ribosome for aminoacyl-tRNA, thus increasing their reactivity as acceptors for peptidyl transferase. This Rhodopseudomonas palustris (strain ATCC BAA-98 / CGA009) protein is Elongation factor P.